A 1520-amino-acid polypeptide reads, in one-letter code: Glutamate synthase [NADPH] large chain (1520 aa).

The For GATase activity role is filled by cysteine 22. The Glutamine amidotransferase type-2 domain maps to 22–415; that stretch reads CGIGLYAHLK…PGKMLLIDLE (394 aa). Residues 890–913 are disordered; the sequence is GGKSNSGEGGEDPKRFVPDENGDD. Positions 900 to 913 are enriched in basic and acidic residues; it reads EDPKRFVPDENGDD. FMN is bound at residue 1060–1112; that stretch reads LAEAHQTLMLNGLRDRVVLETDGKLMTGRDVVMAALLGAEEFGFATAPLVVLG. Positions 1113, 1119, and 1124 each coordinate [3Fe-4S] cluster.

The protein belongs to the glutamate synthase family. In terms of assembly, aggregate of 4 catalytic active heterodimers, consisting of a large and a small subunit. [3Fe-4S] cluster serves as cofactor. Requires FAD as cofactor. FMN is required as a cofactor.

The enzyme catalyses 2 L-glutamate + NADP(+) = L-glutamine + 2-oxoglutarate + NADPH + H(+). It functions in the pathway amino-acid biosynthesis; L-glutamate biosynthesis via GLT pathway; L-glutamate from 2-oxoglutarate and L-glutamine (NADP(+) route): step 1/1. It participates in energy metabolism; nitrogen metabolism. The sequence is that of Glutamate synthase [NADPH] large chain (gltA) from Bacillus subtilis (strain 168).